The chain runs to 163 residues: Carbon monoxide dehydrogenase small chain (163 aa).

The region spanning 4–80 (KIITVNVNGK…GSEVLTVEGL (77 aa)) is the 2Fe-2S ferredoxin-type domain. Residues cysteine 42, cysteine 47, cysteine 50, cysteine 62, cysteine 101, cysteine 104, cysteine 136, and cysteine 138 each coordinate [2Fe-2S] cluster.

As to quaternary structure, dimer of heterotrimers. Each heterotrimer consists of a large, a medium and a small subunit. [2Fe-2S] cluster serves as cofactor.

It carries out the reaction CO + a quinone + H2O = a quinol + CO2. Its function is as follows. Catalyzes the oxidation of carbon monoxide to carbon dioxide. This is Carbon monoxide dehydrogenase small chain (cutS) from Hydrogenophaga pseudoflava (Pseudomonas carboxydoflava).